Consider the following 370-residue polypeptide: MASSTSARTPAGKRVVNQEELRRLMKEKQRLSTNRKRIESPFAKYNRLGQLSCALCNTPVKSELLWQTHVLGKQHRERVAELKGAKGATQGPSAGTAPQPTKRKTTDVESQDAKKAKASVDQVQPSTSASSANFEKSGKEATRVASSKTGLGLLPDYEEEEEEEEEEELGGGEERRDSSKHLPDAQGREHSLASPRETTSNVLPNDPFNTNPPKAPLVPHSGSIEKAEIHEKVVERRENTAEALPEGFFDDPEVDAKVRKVDAPKDQMDKEWDEFQKAMRQVNTISEAIVAEEDEEGRLDRQIGEIDEQIECYRRVEKLRNRQDEIKNKLKEVLTIKELQKKEEENVDSDDEGELQDLLSQDWRVKGALL.

Disordered stretches follow at residues 1 to 21 (MASS…QEEL) and 75 to 220 (HRER…LVPH). A2 is subject to N-acetylalanine. Positions 16–40 (VNQEELRRLMKEKQRLSTNRKRIES) form a coiled coil. Residues 53–75 (CALCNTPVKSELLWQTHVLGKQH) form a C2H2-type zinc finger. Residues 90-99 (QGPSAGTAPQ) are compositionally biased toward polar residues. A compositionally biased stretch (basic and acidic residues) spans 104-115 (KTTDVESQDAKK). A compositionally biased stretch (polar residues) spans 121–134 (DQVQPSTSASSANF). Residues 156 to 171 (DYEEEEEEEEEEELGG) are compositionally biased toward acidic residues. The segment covering 172–191 (GEERRDSSKHLPDAQGREHS) has biased composition (basic and acidic residues). Positions 196–212 (RETTSNVLPNDPFNTNP) are enriched in polar residues. S223 carries the post-translational modification Phosphoserine. Positions 310-338 (IECYRRVEKLRNRQDEIKNKLKEVLTIKE) form a coiled coil. Residues S349 and S360 each carry the phosphoserine modification.

Component of the XAB2 complex, a multimeric protein complex composed of XAB2, PRPF19, AQR, ZNF830, ISY1, and PPIE; this complex binds preferentially to RNA. Interacts with XAB2. Identified in a pentameric intron-binding (IB) complex composed of AQR, XAB2, ISY1, ZNF830 and PPIE that is incorporated into the spliceosome as a preassembled complex. The IB complex does not contain PRPF19. In terms of processing, phosphorylated in response to DNA damage by the cell cycle checkpoint kinases ATR/ATM.

The protein resides in the nucleus. Its subcellular location is the chromosome. It is found in the nucleus speckle. May play a role in pre-mRNA splicing as component of the spliceosome. Acts as an important regulator of the cell cycle that participates in the maintenance of genome integrity. During cell cycle progression in embryonic fibroblast, prevents replication fork collapse, double-strand break formation and cell cycle checkpoint activation. Controls mitotic cell cycle progression and cell survival in rapidly proliferating intestinal epithelium and embryonic stem cells. During the embryo preimplantation, controls different aspects of M phase. During early oocyte growth, plays a role in oocyte survival by preventing chromosomal breaks formation, activation of TP63 and reduction of transcription. The polypeptide is Zinc finger protein 830 (Rattus norvegicus (Rat)).